The following is a 135-amino-acid chain: uncharacterized protein (135 aa).

The tract at residues 56 to 135 (VQSHNRGINN…QKGQLKIEKV (80 aa)) is disordered. Basic residues predominate over residues 64-74 (NNRRRDQKRKQ). Residues 77-89 (SIKQDNDLNVSSE) are compositionally biased toward polar residues. The segment covering 108–135 (YKETPDLDEPGSREKRVSQKGQLKIEKV) has biased composition (basic and acidic residues).

This is an uncharacterized protein from Schizosaccharomyces pombe (strain 972 / ATCC 24843) (Fission yeast).